Here is a 216-residue protein sequence, read N- to C-terminus: LexA repressor (216 aa).

The H-T-H motif DNA-binding region spans 28–48; that stretch reads RAEIAAEFGFSSPNAAEEHLR. Catalysis depends on for autocatalytic cleavage activity residues Ser134 and Lys171.

It belongs to the peptidase S24 family. In terms of assembly, homodimer.

It carries out the reaction Hydrolysis of Ala-|-Gly bond in repressor LexA.. Its function is as follows. Represses a number of genes involved in the response to DNA damage (SOS response), including recA and lexA. In the presence of single-stranded DNA, RecA interacts with LexA causing an autocatalytic cleavage which disrupts the DNA-binding part of LexA, leading to derepression of the SOS regulon and eventually DNA repair. This Ralstonia nicotianae (strain ATCC BAA-1114 / GMI1000) (Ralstonia solanacearum) protein is LexA repressor.